Here is an 870-residue protein sequence, read N- to C-terminus: DNA-directed RNA polymerase subunit Rpo1N (870 aa).

Cysteine 60, cysteine 63, cysteine 70, histidine 73, cysteine 100, cysteine 103, cysteine 146, and cysteine 149 together coordinate Zn(2+). Residues aspartate 451, aspartate 453, and aspartate 455 each contribute to the Mg(2+) site.

Belongs to the RNA polymerase beta' chain family. As to quaternary structure, part of the RNA polymerase complex. Mg(2+) is required as a cofactor. The cofactor is Zn(2+).

It is found in the cytoplasm. The enzyme catalyses RNA(n) + a ribonucleoside 5'-triphosphate = RNA(n+1) + diphosphate. Its function is as follows. DNA-dependent RNA polymerase (RNAP) catalyzes the transcription of DNA into RNA using the four ribonucleoside triphosphates as substrates. Forms the clamp head domain. This Methanothermobacter thermautotrophicus (strain ATCC 29096 / DSM 1053 / JCM 10044 / NBRC 100330 / Delta H) (Methanobacterium thermoautotrophicum) protein is DNA-directed RNA polymerase subunit Rpo1N.